A 294-amino-acid chain; its full sequence is ATP phosphoribosyltransferase (294 aa).

Belongs to the ATP phosphoribosyltransferase family. Long subfamily. The cofactor is Mg(2+).

It localises to the cytoplasm. The enzyme catalyses 1-(5-phospho-beta-D-ribosyl)-ATP + diphosphate = 5-phospho-alpha-D-ribose 1-diphosphate + ATP. It participates in amino-acid biosynthesis; L-histidine biosynthesis; L-histidine from 5-phospho-alpha-D-ribose 1-diphosphate: step 1/9. Its activity is regulated as follows. Feedback inhibited by histidine. Catalyzes the condensation of ATP and 5-phosphoribose 1-diphosphate to form N'-(5'-phosphoribosyl)-ATP (PR-ATP). Has a crucial role in the pathway because the rate of histidine biosynthesis seems to be controlled primarily by regulation of HisG enzymatic activity. This is ATP phosphoribosyltransferase from Chlorobium luteolum (strain DSM 273 / BCRC 81028 / 2530) (Pelodictyon luteolum).